Here is a 324-residue protein sequence, read N- to C-terminus: Beta-ketoacyl-[acyl-carrier-protein] synthase III (324 aa).

Residues C112 and H249 contribute to the active site. Residues 250–254 form an ACP-binding region; it reads QANRR. The active site involves N279.

It belongs to the thiolase-like superfamily. FabH family. Homodimer.

Its subcellular location is the cytoplasm. The catalysed reaction is malonyl-[ACP] + acetyl-CoA + H(+) = 3-oxobutanoyl-[ACP] + CO2 + CoA. Its pathway is lipid metabolism; fatty acid biosynthesis. Functionally, catalyzes the condensation reaction of fatty acid synthesis by the addition to an acyl acceptor of two carbons from malonyl-ACP. Catalyzes the first condensation reaction which initiates fatty acid synthesis and may therefore play a role in governing the total rate of fatty acid production. Possesses both acetoacetyl-ACP synthase and acetyl transacylase activities. Its substrate specificity determines the biosynthesis of branched-chain and/or straight-chain of fatty acids. The chain is Beta-ketoacyl-[acyl-carrier-protein] synthase III from Streptococcus equi subsp. zooepidemicus (strain MGCS10565).